A 179-amino-acid chain; its full sequence is Cytochrome b6-f complex iron-sulfur subunit (179 aa).

The helical transmembrane segment at 21-43 threads the bilayer; sequence LLTFGTVTGVALGALYPVVKYFI. Residues 61–162 enclose the Rieske domain; sequence GNDVSLSKFL…ANTVDDKIIL (102 aa). Residues Cys-108, His-110, Cys-126, and His-129 each coordinate [2Fe-2S] cluster. A disulfide bridge links Cys-113 with Cys-128.

It belongs to the Rieske iron-sulfur protein family. As to quaternary structure, the 4 large subunits of the cytochrome b6-f complex are cytochrome b6, subunit IV (17 kDa polypeptide, PetD), cytochrome f and the Rieske protein, while the 4 small subunits are PetG, PetL, PetM and PetN. The complex functions as a dimer. It depends on [2Fe-2S] cluster as a cofactor.

The protein localises to the cellular thylakoid membrane. The catalysed reaction is 2 oxidized [plastocyanin] + a plastoquinol + 2 H(+)(in) = 2 reduced [plastocyanin] + a plastoquinone + 4 H(+)(out). Component of the cytochrome b6-f complex, which mediates electron transfer between photosystem II (PSII) and photosystem I (PSI), cyclic electron flow around PSI, and state transitions. This Desmonostoc sp. (strain PCC 7906) (Nostoc sp. (strain PCC 7906)) protein is Cytochrome b6-f complex iron-sulfur subunit.